The primary structure comprises 165 residues: Growth arrest and DNA damage-inducible protein GADD45 alpha (165 aa).

Phosphothreonine is present on T2.

This sequence belongs to the GADD45 family. As to quaternary structure, interacts with AURKA, PCNA, GADD45GIP1 and MAPK14.

It is found in the nucleus. Its function is as follows. Might affect PCNA interaction with some CDK (cell division protein kinase) complexes; stimulates DNA excision repair in vitro and inhibits entry of cells into S phase. In T-cells, functions as a regulator of p38 MAPKs by inhibiting p88 phosphorylation and activity. This is Growth arrest and DNA damage-inducible protein GADD45 alpha (Gadd45a) from Rattus norvegicus (Rat).